The chain runs to 69 residues: UPF0291 protein CD630_10710 (69 aa).

The protein belongs to the UPF0291 family.

It is found in the cytoplasm. The polypeptide is UPF0291 protein CD630_10710 (Clostridioides difficile (strain 630) (Peptoclostridium difficile)).